Here is a 159-residue protein sequence, read N- to C-terminus: Probable cyclic pyranopterin monophosphate synthase (159 aa).

Substrate is bound by residues 75–77 (LCH) and 111–112 (ME). Residue Asp-126 is part of the active site.

It belongs to the MoaC family. Homohexamer; trimer of dimers.

The catalysed reaction is (8S)-3',8-cyclo-7,8-dihydroguanosine 5'-triphosphate = cyclic pyranopterin phosphate + diphosphate. Its pathway is cofactor biosynthesis; molybdopterin biosynthesis. In terms of biological role, catalyzes the conversion of (8S)-3',8-cyclo-7,8-dihydroguanosine 5'-triphosphate to cyclic pyranopterin monophosphate (cPMP). The polypeptide is Probable cyclic pyranopterin monophosphate synthase (Pyrococcus horikoshii (strain ATCC 700860 / DSM 12428 / JCM 9974 / NBRC 100139 / OT-3)).